Consider the following 623-residue polypeptide: MESYHKPDQQKLQALKDTANRLRISSIQATTAAGSGHPTSCCSAAEIMAVLFFHTMRYKSQDPRNPHNDRFVLSKGHAAPILYAVWAEAGFLAEAELLNLRKISSDLDGHPVPKQAFTDVATGSLGQGLGAACGMAYTGKYFDKASYRVYCLLGDGELSEGSVWEAMAFASIYKLDNLVAILDINRLGQSDPAPLQHQMDIYQKRCEAFGWHAIIVDGHSVEELCKAFGQAKHQPTAIIAKTFKGRGITGVEDKESWHGKPLPKNMAEQIIQEIYSQIQSKKKILATPPQEDAPSVDIANIRMPSLPSYKVGDKIATRKAYGQALAKLGHASDRIIALDGDTKNSTFSEIFKKEHPDRFIECYIAEQNMVSIAVGCATRNRTVPFCSTFAAFFTRAFDQIRMAAISESNINLCGSHCGVSIGEDGPSQMALEDLAMFRSVPTSTVFYPSDGVATEKAVELAANTKGICFIRTSRPENAIIYNNNEDFQVGQAKVVLKSKDDQVTVIGAGVTLHEALAAAELLKKEKINIRVLDPFTIKPLDRKLILDSARATKGRILTVEDHYYEGGIGEAVSSAVVGEPGITVTHLAVNRVPRSGKPAELLKMFGIDRDAIAQAVRGLITKA.

At Met-1 the chain carries N-acetylmethionine. Ser-3 carries the phosphoserine modification. 2 positions are modified to N6-acetyllysine: Lys-6 and Lys-11. Substrate is bound at residue His-37. Thiamine diphosphate-binding residues include Ser-40 and His-77. Position 104 is a phosphoserine (Ser-104). Gly-123–Leu-125 contributes to the thiamine diphosphate binding site. Lys-144 carries the N6-acetyllysine modification. Asp-155 contacts Mg(2+). Thiamine diphosphate-binding residues include Gly-156 and Asn-185. 2 residues coordinate Mg(2+): Asn-185 and Leu-187. Residues Lys-204, Lys-232, and Lys-241 each carry the N6-acetyllysine modification. Positions 244 and 258 each coordinate thiamine diphosphate. Substrate is bound at residue His-258. Lys-260 bears the N6-acetyllysine mark. At Tyr-275 the chain carries Phosphotyrosine. At Thr-287 the chain carries Phosphothreonine. Ser-295 carries the post-translational modification Phosphoserine. Substrate-binding residues include Arg-318 and Ser-345. Position 345 is a phosphoserine (Ser-345). Residue Lys-352 forms a Glycyl lysine isopeptide (Lys-Gly) (interchain with G-Cter in SUMO2) linkage. Glu-366 functions as the Proton donor in the catalytic mechanism. Phe-392 is a binding site for thiamine diphosphate. Residues His-416 and Asp-424 each coordinate substrate. Position 428 (Gln-428) interacts with thiamine diphosphate. Arg-474 lines the substrate pocket. Lys-538 and Lys-603 each carry N6-acetyllysine.

This sequence belongs to the transketolase family. In terms of assembly, homodimer. It depends on Mg(2+) as a cofactor. Ca(2+) is required as a cofactor. Mn(2+) serves as cofactor. The cofactor is Co(2+). Requires thiamine diphosphate as cofactor.

It carries out the reaction D-sedoheptulose 7-phosphate + D-glyceraldehyde 3-phosphate = aldehydo-D-ribose 5-phosphate + D-xylulose 5-phosphate. Catalyzes the transfer of a two-carbon ketol group from a ketose donor to an aldose acceptor, via a covalent intermediate with the cofactor thiamine pyrophosphate. This chain is Transketolase (TKT), found in Homo sapiens (Human).